Reading from the N-terminus, the 334-residue chain is Ketol-acid reductoisomerase (NADP(+)) (334 aa).

Positions 1–181 (MTTVYYDQDV…GATRAGVIET (181 aa)) constitute a KARI N-terminal Rossmann domain. Residues 25-28 (YGSQ), R48, S52, and 82-85 (DEIQ) each bind NADP(+). Residue H107 is part of the active site. NADP(+) is bound at residue G133. The KARI C-terminal knotted domain occupies 182-327 (TFKEETETDL…RELREMMPFI (146 aa)). Mg(2+) contacts are provided by D190, E194, E226, and E230. S251 serves as a coordination point for substrate.

It belongs to the ketol-acid reductoisomerase family. Mg(2+) serves as cofactor.

The enzyme catalyses (2R)-2,3-dihydroxy-3-methylbutanoate + NADP(+) = (2S)-2-acetolactate + NADPH + H(+). It catalyses the reaction (2R,3R)-2,3-dihydroxy-3-methylpentanoate + NADP(+) = (S)-2-ethyl-2-hydroxy-3-oxobutanoate + NADPH + H(+). The protein operates within amino-acid biosynthesis; L-isoleucine biosynthesis; L-isoleucine from 2-oxobutanoate: step 2/4. Its pathway is amino-acid biosynthesis; L-valine biosynthesis; L-valine from pyruvate: step 2/4. Functionally, involved in the biosynthesis of branched-chain amino acids (BCAA). Catalyzes an alkyl-migration followed by a ketol-acid reduction of (S)-2-acetolactate (S2AL) to yield (R)-2,3-dihydroxy-isovalerate. In the isomerase reaction, S2AL is rearranged via a Mg-dependent methyl migration to produce 3-hydroxy-3-methyl-2-ketobutyrate (HMKB). In the reductase reaction, this 2-ketoacid undergoes a metal-dependent reduction by NADPH to yield (R)-2,3-dihydroxy-isovalerate. This Staphylococcus aureus (strain MSSA476) protein is Ketol-acid reductoisomerase (NADP(+)).